A 764-amino-acid chain; its full sequence is ATP-dependent DNA helicase DDM1 (764 aa).

Residues 1 to 42 (MVSLRSRKVIPASEMVSDGKTEKDASGDSPTSVLNEEENCEE) form a disordered region. Residues 17 to 26 (SDGKTEKDAS) are compositionally biased toward basic and acidic residues. Positions 62–88 (LISEAMAQEEEQLLKLREDEEKANNAG) form a coiled coil. Residues 129-152 (IESESQKAEPEKTGRGRKRKAASQ) are disordered. Residues 132–142 (ESQKAEPEKTG) are compositionally biased toward basic and acidic residues. Residues 145-152 (RKRKAASQ) carry the Nuclear localization signal 1 motif. The region spanning 214–382 (ISLWQNGLNG…WSLLNFILPD (169 aa)) is the Helicase ATP-binding domain. 227–234 (DQMGLGKT) serves as a coordination point for ATP. A DEAH box motif is present at residues 333–336 (DEGH). The short motif at 429–436 (LRRMKCDV) is the Nuclear localization signal 2 element. Positions 528-695 (LLERLLVRLF…STPLEEEDIL (168 aa)) constitute a Helicase C-terminal domain.

It belongs to the SNF2/RAD54 helicase family. As to quaternary structure, interacts with the MBD domains of MBD2, MBD5 and MBD6.

The protein resides in the nucleus. The catalysed reaction is ATP + H2O = ADP + phosphate + H(+). Its activity is regulated as follows. ATPase activity is stimulated 3-fold by DNA (both free and nucleosomal) binding. Its function is as follows. ATP-dependent DNA helicase that plays a role in formation, organization, stability and heritability of heterochromatin and thus regulates several physiological traits. Binds to the nucleosome and promotes chromatin remodeling in an ATP-dependent manner; induces nucleosome repositioning on a short DNA fragment, and, possibly, could be guided to target sites (including silent transposable elements) by small interfering RNAs (siRNAs). Can bind both free and nucleosomal DNA. Required for the heritable maintenance of genome integrity and transcriptional gene silencing (TGS), including homology-dependent gene silencing (HDG silencing), via the maintenance of DNA methylation (mostly on cytosine, in both CpG and CpHpG sites, where H is A, T or C) and of histone methylation (e.g. chromatin methylation). May facilitate localization of MBD proteins at specific nuclear domains. Necessary for the maintenance of the genomic imprint at the MEA locus, especially for the silencing of paternally inherited MEA locus. Plays a major role in the inactivation maintenance of retrotransposons (e.g. Tar17, SINE, LINE, ATLN39, CAC1 (CACTAs), Athila elements, and mutator-like elements MULEs and TIR-MULEs) and the silencing of repeated genes and transgenes (e.g. T-DNA insertions). Required for KYP-dependent histone H3 'Lys-9' (H3K9me) methylation, deacetylation of histone H4 'Lys-16' (H4K16) and MET1-dependent DNA methylation. Involved in the chromatin organization of 5S rRNA genes (localized in the pericentromeric heterochromatin of chromosomes 3, 4, and 5) modifications during heterochromatin establishment. Prevents siRNA accumulation (siRNA are probably involved in epigenetic inheritance and in 5S rRNA genes regulation by silencing). Required during plant organogenesis and development, as well as during seed formation. In Arabidopsis thaliana (Mouse-ear cress), this protein is ATP-dependent DNA helicase DDM1 (DDM1).